The primary structure comprises 93 residues: Sec-independent protein translocase protein TatA (93 aa).

Residues 1-21 traverse the membrane as a helical segment; the sequence is MGNVFSGWHLLVILLVIVLLF. Positions 49–93 are disordered; that stretch reads DITRSQDGHPDSQGNFAESASSVPFVKSEKQSEKRASVTEAKKSK. Polar residues predominate over residues 60-70; it reads SQGNFAESASS. Residues 75 to 93 are compositionally biased toward basic and acidic residues; sequence KSEKQSEKRASVTEAKKSK.

The protein belongs to the TatA/E family. As to quaternary structure, the Tat system comprises two distinct complexes: a TatABC complex, containing multiple copies of TatA, TatB and TatC subunits, and a separate TatA complex, containing only TatA subunits. Substrates initially bind to the TatABC complex, which probably triggers association of the separate TatA complex to form the active translocon.

It is found in the cell membrane. Part of the twin-arginine translocation (Tat) system that transports large folded proteins containing a characteristic twin-arginine motif in their signal peptide across membranes. TatA could form the protein-conducting channel of the Tat system. This chain is Sec-independent protein translocase protein TatA, found in Tropheryma whipplei (strain TW08/27) (Whipple's bacillus).